The following is a 556-amino-acid chain: MSVSAFNRRWAAVILEALTRHGVRHVCIAPGSRSTPLTLAAAENPAFIHHTHFDERGLGHLALGLAKVSQQPVAVIVTSGTAVANLYSALIEAGLTGEKLILLTADRPPELIDCGANQAIRQAGMFASHPSQTLSLPRPTQDIPARWLVSTIDNALAMLHAGALHINCPFAEPLYGDMNDTGLVWQQRLGDWWQDEKPWLREARRLESDKQRDWFFWRQKRGVVVAGRMSAEEGKKVAQWAQTLGWPLIGDVLSQTGQPLPCADLWLGNAKAVTELQQAQIVVQLGSSLTGKRLLQWQATCEPEEYWVIDNIEGRLDPAHHRGRRLVAKIADWLELHPAEKRKPWCVEIPRLAELAWQRVVAQRDTFGEAQLAHRIRDYLPEQGQLFVGNSLVVRLIDALSQLPAGYPVYSNRGASGIDGLLSTAAGVQRASAKSTLAIVGDLSALYDLNALALLRQVSAPFVLIVVNNNGGQIFSLLPTPQSKRERFYLMPQNVHFDHAAAMFNLRYHRPENWEELESALAGAWRTPATTVIELVVNDTDGAQTLQQLLAQVSHL.

It belongs to the TPP enzyme family. MenD subfamily. As to quaternary structure, homodimer. It depends on Mg(2+) as a cofactor. Mn(2+) is required as a cofactor. Thiamine diphosphate serves as cofactor.

The catalysed reaction is isochorismate + 2-oxoglutarate + H(+) = 5-enolpyruvoyl-6-hydroxy-2-succinyl-cyclohex-3-ene-1-carboxylate + CO2. It participates in quinol/quinone metabolism; 1,4-dihydroxy-2-naphthoate biosynthesis; 1,4-dihydroxy-2-naphthoate from chorismate: step 2/7. Its pathway is quinol/quinone metabolism; menaquinone biosynthesis. In terms of biological role, catalyzes the thiamine diphosphate-dependent decarboxylation of 2-oxoglutarate and the subsequent addition of the resulting succinic semialdehyde-thiamine pyrophosphate anion to isochorismate to yield 2-succinyl-5-enolpyruvyl-6-hydroxy-3-cyclohexene-1-carboxylate (SEPHCHC). This chain is 2-succinyl-5-enolpyruvyl-6-hydroxy-3-cyclohexene-1-carboxylate synthase, found in Salmonella gallinarum (strain 287/91 / NCTC 13346).